Here is a 392-residue protein sequence, read N- to C-terminus: Cell division protein DivIB (392 aa).

The interval 1 to 87 (MSEKDNNLTP…ETQSSEAPIE (87 aa)) is disordered. Over 1–131 (MSEKDNNLTP…KGSAPLLKKM (131 aa)) the chain is Cytoplasmic. The span at 14-32 (KHLEYQKRKAEEAKKEKKA) shows a compositional bias: basic and acidic residues. Residues 58-76 (TRDEAESAELLEEGFETNN) show a composition bias toward acidic residues. Residues 132-152 (WPALAIVVLVFVGSLYLISPL) traverse the membrane as a helical segment. In terms of domain architecture, POTRA spans 153–224 (SKISTFSVSG…NRFEAIVKEH (72 aa)). At 153-392 (SKISTFSVSG…TAQSTTTSSN (240 aa)) the chain is on the extracellular side. Residues 368–392 (ISAQNAKKTDASSENTAQSTTTSSN) form a disordered region.

It belongs to the FtsQ/DivIB family. DivIB subfamily.

The protein resides in the cell membrane. Its function is as follows. Cell division protein that may be involved in stabilizing or promoting the assembly of the division complex. This Lactococcus lactis subsp. lactis (strain IL1403) (Streptococcus lactis) protein is Cell division protein DivIB.